We begin with the raw amino-acid sequence, 188 residues long: Ion-translocating oxidoreductase complex subunit B (188 aa).

Residues 1–26 (MMSLWIAIGALSTLALVSGVVLGFAA) are hydrophobic. Positions 32–91 (DEDPVVEQVDAILPQSQCGQCGYPGCRPYAEAVSTGGEKINKCAPGGEQVMLKLAELLAV) constitute a 4Fe-4S domain. Residues C49, C52, C57, C74, C117, C120, C123, C127, C147, C150, C153, and C157 each coordinate [4Fe-4S] cluster. 4Fe-4S ferredoxin-type domains lie at 108–137 (KVAF…GATR) and 138–167 (AMHT…MIPV).

It belongs to the 4Fe4S bacterial-type ferredoxin family. RnfB subfamily. The complex is composed of six subunits: RnfA, RnfB, RnfC, RnfD, RnfE and RnfG. [4Fe-4S] cluster is required as a cofactor.

It is found in the cell inner membrane. In terms of biological role, part of a membrane-bound complex that couples electron transfer with translocation of ions across the membrane. The chain is Ion-translocating oxidoreductase complex subunit B from Yersinia pestis bv. Antiqua (strain Antiqua).